An 89-amino-acid chain; its full sequence is DNA/RNA-binding protein Alba (89 aa).

Lys-11 bears the N6-acetyllysine mark.

This sequence belongs to the histone-like Alba family. Acetylated. Acetylation at Lys-11 decreases DNA-binding affinity.

The protein localises to the cytoplasm. Its subcellular location is the chromosome. In terms of biological role, binds double-stranded DNA tightly but without sequence specificity. Involved in DNA compaction. In Thermoplasma acidophilum (strain ATCC 25905 / DSM 1728 / JCM 9062 / NBRC 15155 / AMRC-C165), this protein is DNA/RNA-binding protein Alba.